Consider the following 145-residue polypeptide: Large ribosomal subunit protein uL11 (145 aa).

Belongs to the universal ribosomal protein uL11 family. As to quaternary structure, part of the ribosomal stalk of the 50S ribosomal subunit. Interacts with L10 and the large rRNA to form the base of the stalk. L10 forms an elongated spine to which L12 dimers bind in a sequential fashion forming a multimeric L10(L12)X complex. In terms of processing, one or more lysine residues are methylated.

Its function is as follows. Forms part of the ribosomal stalk which helps the ribosome interact with GTP-bound translation factors. In Sulfurihydrogenibium sp. (strain YO3AOP1), this protein is Large ribosomal subunit protein uL11.